Here is a 154-residue protein sequence, read N- to C-terminus: 6,7-dimethyl-8-ribityllumazine synthase (154 aa).

5-amino-6-(D-ribitylamino)uracil contacts are provided by residues Phe22, 56-58, and 81-83; these read AFE and VLI. 86 to 87 contacts (2S)-2-hydroxy-3-oxobutyl phosphate; that stretch reads ET. The active-site Proton donor is His89. Leu114 contacts 5-amino-6-(D-ribitylamino)uracil. Residue Arg128 participates in (2S)-2-hydroxy-3-oxobutyl phosphate binding.

This sequence belongs to the DMRL synthase family.

The catalysed reaction is (2S)-2-hydroxy-3-oxobutyl phosphate + 5-amino-6-(D-ribitylamino)uracil = 6,7-dimethyl-8-(1-D-ribityl)lumazine + phosphate + 2 H2O + H(+). It functions in the pathway cofactor biosynthesis; riboflavin biosynthesis; riboflavin from 2-hydroxy-3-oxobutyl phosphate and 5-amino-6-(D-ribitylamino)uracil: step 1/2. Its function is as follows. Catalyzes the formation of 6,7-dimethyl-8-ribityllumazine by condensation of 5-amino-6-(D-ribitylamino)uracil with 3,4-dihydroxy-2-butanone 4-phosphate. This is the penultimate step in the biosynthesis of riboflavin. The sequence is that of 6,7-dimethyl-8-ribityllumazine synthase from Chlamydia pneumoniae (Chlamydophila pneumoniae).